A 209-amino-acid chain; its full sequence is Ubiquitin-conjugating enzyme E2 S (209 aa).

The region spanning 14 to 160 (QTIRQVMREL…ARMMTEIHAQ (147 aa)) is the UBC core domain. C98 (glycyl thioester intermediate) is an active-site residue. The interval 168–194 (AVGDAKDDGGPSTKKHAGLDKKLQDKK) is disordered. Positions 184 to 194 (AGLDKKLQDKK) are enriched in basic and acidic residues.

It belongs to the ubiquitin-conjugating enzyme family.

It catalyses the reaction S-ubiquitinyl-[E1 ubiquitin-activating enzyme]-L-cysteine + [E2 ubiquitin-conjugating enzyme]-L-cysteine = [E1 ubiquitin-activating enzyme]-L-cysteine + S-ubiquitinyl-[E2 ubiquitin-conjugating enzyme]-L-cysteine.. It participates in protein modification; protein ubiquitination. Its function is as follows. Catalyzes the covalent attachment of ubiquitin to other proteins. Acts as an essential factor of the anaphase promoting complex/cyclosome (APC/C), a cell cycle-regulated ubiquitin ligase that controls progression through mitosis. Acts by specifically elongating polyubiquitin chains initiated by the E2 enzyme vih/UbcH10 on APC/C substrates, enhancing the degradation of APC/C substrates by the proteasome and promoting mitotic exit. This chain is Ubiquitin-conjugating enzyme E2 S, found in Drosophila melanogaster (Fruit fly).